The following is a 566-amino-acid chain: Developmental regulatory protein wetA (566 aa).

Disordered stretches follow at residues 116 to 174 (VPAV…LMRP), 232 to 316 (STEG…SDSL), 334 to 364 (AWWP…SIQS), 381 to 400 (SSFD…VTSA), and 429 to 542 (PPVQ…RRRK). 2 stretches are compositionally biased toward polar residues: residues 165–174 (QSFSPSLMRP) and 269–291 (AQQQ…SSPP). Residues 298–316 (SSPHSSDPQSLSSWHSDSL) show a composition bias toward low complexity. Polar residues-rich tracts occupy residues 347–364 (PSYQ…SIQS) and 381–398 (SSFD…SVVT). The span at 435-448 (SRSPSLSPRGRGSP) shows a compositional bias: low complexity. Polar residues predominate over residues 449-462 (TQGSPLRNEASTKT). The segment covering 463-473 (SPHRRGYHGRK) has biased composition (basic residues). Residues 482-500 (PKPVKGPNSSSPGSGSNKS) show a composition bias toward low complexity. The span at 501-511 (LTVSFVNFTPN) shows a compositional bias: polar residues.

It belongs to the wetA family.

BrlA, abaA and wetA are pivotal regulators of conidiophore development and conidium maturation. They act individually and together to regulate their own expression and that of numerous other sporulation-specific genes. Plays an essential role in the completion of conidial maturation and is essential for trehalose biogenesis in conidia. Negatively regulates expression of the melanin biosynthetic gene cluster. Also plays an a role in the early phase of fungal growth including proper hyphal branching. The sequence is that of Developmental regulatory protein wetA from Aspergillus fumigatus (strain ATCC MYA-4609 / CBS 101355 / FGSC A1100 / Af293) (Neosartorya fumigata).